The primary structure comprises 23 residues: Profilin (23 aa).

It belongs to the profilin family. As to quaternary structure, occurs in many kinds of cells as a complex with monomeric actin in a 1:1 ratio.

It is found in the cytoplasm. It localises to the cytoskeleton. Its function is as follows. Binds to actin and affects the structure of the cytoskeleton. At high concentrations, profilin prevents the polymerization of actin, whereas it enhances it at low concentrations. By binding to PIP2, it inhibits the formation of IP3 and DG. The chain is Profilin from Beta vulgaris (Sugar beet).